The sequence spans 601 residues: Elongation factor 4 (601 aa).

The 183-residue stretch at 6–188 folds into the tr-type G domain; the sequence is SHIRNFSIIA…QIVHRVPPPE (183 aa). GTP contacts are provided by residues 18–23 and 135–138; these read DHGKST and NKID.

This sequence belongs to the TRAFAC class translation factor GTPase superfamily. Classic translation factor GTPase family. LepA subfamily.

The protein localises to the cell inner membrane. The enzyme catalyses GTP + H2O = GDP + phosphate + H(+). Functionally, required for accurate and efficient protein synthesis under certain stress conditions. May act as a fidelity factor of the translation reaction, by catalyzing a one-codon backward translocation of tRNAs on improperly translocated ribosomes. Back-translocation proceeds from a post-translocation (POST) complex to a pre-translocation (PRE) complex, thus giving elongation factor G a second chance to translocate the tRNAs correctly. Binds to ribosomes in a GTP-dependent manner. This chain is Elongation factor 4, found in Anaeromyxobacter dehalogenans (strain 2CP-C).